Here is a 186-residue protein sequence, read N- to C-terminus: Ribosome-recycling factor (186 aa).

Belongs to the RRF family.

The protein localises to the cytoplasm. In terms of biological role, responsible for the release of ribosomes from messenger RNA at the termination of protein biosynthesis. May increase the efficiency of translation by recycling ribosomes from one round of translation to another. The chain is Ribosome-recycling factor from Nitratidesulfovibrio vulgaris (strain DP4) (Desulfovibrio vulgaris).